The following is a 194-amino-acid chain: Holliday junction branch migration complex subunit RuvA (194 aa).

Residues 1-61 (MYDFLTGIIK…DNQISLYGFK (61 aa)) form a domain I region. Residues 62–139 (TVKERNLFQK…GDFSKNIAPM (78 aa)) form a domain II region. A flexible linker region spans residues 139-143 (MKNLL). A domain III region spans residues 144-194 (ENSAELDDALAALVALGFSSKEVNKINPKLASLGELTTDAYIQKGLKLLTK).

It belongs to the RuvA family. As to quaternary structure, homotetramer. Forms an RuvA(8)-RuvB(12)-Holliday junction (HJ) complex. HJ DNA is sandwiched between 2 RuvA tetramers; dsDNA enters through RuvA and exits via RuvB. An RuvB hexamer assembles on each DNA strand where it exits the tetramer. Each RuvB hexamer is contacted by two RuvA subunits (via domain III) on 2 adjacent RuvB subunits; this complex drives branch migration. In the full resolvosome a probable DNA-RuvA(4)-RuvB(12)-RuvC(2) complex forms which resolves the HJ.

The protein resides in the cytoplasm. Functionally, the RuvA-RuvB-RuvC complex processes Holliday junction (HJ) DNA during genetic recombination and DNA repair, while the RuvA-RuvB complex plays an important role in the rescue of blocked DNA replication forks via replication fork reversal (RFR). RuvA specifically binds to HJ cruciform DNA, conferring on it an open structure. The RuvB hexamer acts as an ATP-dependent pump, pulling dsDNA into and through the RuvAB complex. HJ branch migration allows RuvC to scan DNA until it finds its consensus sequence, where it cleaves and resolves the cruciform DNA. This chain is Holliday junction branch migration complex subunit RuvA, found in Oenococcus oeni (strain ATCC BAA-331 / PSU-1).